We begin with the raw amino-acid sequence, 221 residues long: Probable septum site-determining protein MinC (221 aa).

The protein belongs to the MinC family. As to quaternary structure, interacts with MinD and FtsZ.

Functionally, cell division inhibitor that blocks the formation of polar Z ring septums. Rapidly oscillates between the poles of the cell to destabilize FtsZ filaments that have formed before they mature into polar Z rings. Prevents FtsZ polymerization. The protein is Probable septum site-determining protein MinC of Shewanella sp. (strain ANA-3).